Reading from the N-terminus, the 172-residue chain is 3-hydroxydecanoyl-[acyl-carrier-protein] dehydratase (172 aa).

The active site involves histidine 71.

It belongs to the thioester dehydratase family. FabA subfamily. As to quaternary structure, homodimer.

The protein resides in the cytoplasm. It carries out the reaction a (3R)-hydroxyacyl-[ACP] = a (2E)-enoyl-[ACP] + H2O. It catalyses the reaction (3R)-hydroxydecanoyl-[ACP] = (2E)-decenoyl-[ACP] + H2O. The enzyme catalyses (2E)-decenoyl-[ACP] = (3Z)-decenoyl-[ACP]. Its pathway is lipid metabolism; fatty acid biosynthesis. Necessary for the introduction of cis unsaturation into fatty acids. Catalyzes the dehydration of (3R)-3-hydroxydecanoyl-ACP to E-(2)-decenoyl-ACP and then its isomerization to Z-(3)-decenoyl-ACP. Can catalyze the dehydratase reaction for beta-hydroxyacyl-ACPs with saturated chain lengths up to 16:0, being most active on intermediate chain length. The protein is 3-hydroxydecanoyl-[acyl-carrier-protein] dehydratase of Blochmanniella pennsylvanica (strain BPEN).